The primary structure comprises 201 residues: Esterase TesA (201 aa).

The N-terminal stretch at 1–21 (MRALLLSGCLALVLLTQQAAA) is a signal peptide. The Nucleophile role is filled by Ser30. Active-site residues include Asp177 and His180.

It belongs to the 'GDSL' lipolytic enzyme family.

The protein resides in the secreted. The enzyme catalyses a carboxylic ester + H2O = an alcohol + a carboxylate + H(+). Its function is as follows. Esterase that exhibits the highest activity towards Tween detergents and p-nitrophenyl esters of short acyl chain length. Also displays a low thioesterase activity towards palmitoyl-coenzyme A, but is not active towards acetyl-coenzyme A. The polypeptide is Esterase TesA (tesA) (Pseudomonas aeruginosa (strain ATCC 15692 / DSM 22644 / CIP 104116 / JCM 14847 / LMG 12228 / 1C / PRS 101 / PAO1)).